A 503-amino-acid polypeptide reads, in one-letter code: Major facilitator superfamily domain-containing protein 4A (503 aa).

12 consecutive transmembrane segments (helical) span residues 19-39 (LTYW…GPTL), 53-73 (ITWV…LGGV), 82-102 (LFLL…IPFC), 105-125 (VGVL…IDTI), 139-159 (AIFL…SPLI), 214-234 (YAFW…FYLI), 289-309 (IWNA…TLFM), 338-358 (GYLP…SIPV), 366-386 (SMLF…LLSQ), 392-412 (MFVG…SMLA), 427-447 (VLVT…GSVM), and 455-475 (FLVC…VLLV). A disordered region spans residues 484-503 (SEDSACKPPGLDGEATSYQS).

This sequence belongs to the major facilitator superfamily.

It is found in the membrane. The protein is Major facilitator superfamily domain-containing protein 4A (mfsd4a) of Xenopus tropicalis (Western clawed frog).